The chain runs to 157 residues: Protein UXT (157 aa).

This sequence belongs to the UXT family. In terms of assembly, homohexamer. Component of the PAQosome complex which is responsible for the biogenesis of several protein complexes and which consists of R2TP complex members RUVBL1, RUVBL2, RPAP3 and PIH1D1, URI complex members PFDN2, PFDN6, PDRG1, UXT and URI1 as well as ASDURF, POLR2E and DNAAF10/WDR92. Interacts with LRPPRC. Interacts with androgen receptor AR (via N-terminus). Interacts with estrogen receptor ESR1; the interaction relocalizes ESR1 from the nucleus to the cytoplasm. In the nucleus, interacts specifically with RELA (via RHD domain) and forms a dynamic complex with NF-kappa-B and is recruited to the NF-kappa-B enhanceosome upon stimulation. Interacts with MECOM. Interacts with URI1. As to quaternary structure, part of complex I composed of TNF-alpha receptor TNFRSF1A, TRADD, TRAF2 and RIPK1 formed in response to TNF-alpha stimulation. Within the complex, interacts (via TPQE motif) with TRAF2; the interaction prevents the recruitment of FADD and CASP8/caspase 8 to complex I. In terms of processing, ubiquitinated by E3 ubiquitin-protein ligase complex containing FBXO7; leading to proteasomal degradation. Ubiquitous. Expressed in prostate epithelial cells. Expressed in mammary epithelial cells. Highest levels in the heart, skeletal muscle, pancreas, kidney, liver, adrenal gland, peripheral blood leukocytes, lymph node, prostate, and thyroid and the lowest levels in bladder and uterus. Overexpressed in a number of tumor tissues.

The protein localises to the cytoplasm. The protein resides in the nucleus. It is found in the cytoskeleton. It localises to the microtubule organizing center. Its subcellular location is the centrosome. The protein localises to the spindle pole. Involved in gene transcription regulation. Acts in concert with the corepressor URI1 to regulate androgen receptor AR-mediated transcription. Together with URI1, associates with chromatin to the NKX3-1 promoter region. Negatively regulates the transcriptional activity of the estrogen receptor ESR1 by inducing its translocation into the cytoplasm. May act as nuclear chaperone that facilitates the formation of the NF-kappa-B enhanceosome and thus positively regulates NF-kappa-B transcription activity. Potential component of mitochondrial-associated LRPPRC, a multidomain organizer that potentially integrates mitochondria and the microtubular cytoskeleton with chromosome remodeling. Increasing concentrations of UXT contributes to progressive aggregation of mitochondria and cell death potentially through its association with LRPPRC. Suppresses cell transformation and it might mediate this function by interaction and inhibition of the biological activity of cell proliferation and survival stimulatory factors like MECOM. Its function is as follows. Plays a role in protecting cells against TNF-alpha-induced apoptosis by preventing the recruitment of FADD and caspase 8 to the apoptotic complex I, composed of TRADD, TRAF2 and RIPK1/RIP. The chain is Protein UXT (UXT) from Homo sapiens (Human).